Reading from the N-terminus, the 361-residue chain is UDP-N-acetylglucosamine--N-acetylmuramyl-(pentapeptide) pyrophosphoryl-undecaprenol N-acetylglucosamine transferase (361 aa).

UDP-N-acetyl-alpha-D-glucosamine-binding positions include 21–23 (TGG), Asn-131, Arg-172, Ser-195, Ile-250, and Gln-295.

The protein belongs to the glycosyltransferase 28 family. MurG subfamily.

The protein resides in the cell inner membrane. It carries out the reaction di-trans,octa-cis-undecaprenyl diphospho-N-acetyl-alpha-D-muramoyl-L-alanyl-D-glutamyl-meso-2,6-diaminopimeloyl-D-alanyl-D-alanine + UDP-N-acetyl-alpha-D-glucosamine = di-trans,octa-cis-undecaprenyl diphospho-[N-acetyl-alpha-D-glucosaminyl-(1-&gt;4)]-N-acetyl-alpha-D-muramoyl-L-alanyl-D-glutamyl-meso-2,6-diaminopimeloyl-D-alanyl-D-alanine + UDP + H(+). Its pathway is cell wall biogenesis; peptidoglycan biosynthesis. In terms of biological role, cell wall formation. Catalyzes the transfer of a GlcNAc subunit on undecaprenyl-pyrophosphoryl-MurNAc-pentapeptide (lipid intermediate I) to form undecaprenyl-pyrophosphoryl-MurNAc-(pentapeptide)GlcNAc (lipid intermediate II). This Solibacter usitatus (strain Ellin6076) protein is UDP-N-acetylglucosamine--N-acetylmuramyl-(pentapeptide) pyrophosphoryl-undecaprenol N-acetylglucosamine transferase.